The following is an 85-amino-acid chain: Large ribosomal subunit protein bL31B (85 aa).

This sequence belongs to the bacterial ribosomal protein bL31 family. Type B subfamily. In terms of assembly, part of the 50S ribosomal subunit.

The polypeptide is Large ribosomal subunit protein bL31B (Porphyromonas gingivalis (strain ATCC 33277 / DSM 20709 / CIP 103683 / JCM 12257 / NCTC 11834 / 2561)).